Here is a 118-residue protein sequence, read N- to C-terminus: BolA-like protein 3 (118 aa).

Belongs to the BolA/IbaG family. As to quaternary structure, interacts with NFU1.

It is found in the mitochondrion matrix. Its function is as follows. Acts as a mitochondrial iron-sulfur (Fe-S) cluster assembly factor that facilitates [4Fe-4S] cluster insertion into a subset of mitochondrial proteins such as lipoyl synthase (LS) and succinate dehydrogenase (SDH). Required during the last step of iron-sulfur protein assembly when the iron-sulfur cluster is inserted into the target protein. Acts together with NFU1, later than BOL1 and GRX5 in the [4Fe-4S] cluster insertion process. Not required for [2Fe-2S] cluster insertion into mitochondrial proteins. In Saccharomyces cerevisiae (strain ATCC 204508 / S288c) (Baker's yeast), this protein is BolA-like protein 3.